The following is a 596-amino-acid chain: Elongation factor 4 (596 aa).

A tr-type G domain is found at 2 to 183 (NNIRNFSIIA…TIIRKIPPPK (182 aa)). GTP is bound by residues 14-19 (DHGKST) and 130-133 (NKID).

The protein belongs to the TRAFAC class translation factor GTPase superfamily. Classic translation factor GTPase family. LepA subfamily.

The protein localises to the cell inner membrane. The enzyme catalyses GTP + H2O = GDP + phosphate + H(+). Its function is as follows. Required for accurate and efficient protein synthesis under certain stress conditions. May act as a fidelity factor of the translation reaction, by catalyzing a one-codon backward translocation of tRNAs on improperly translocated ribosomes. Back-translocation proceeds from a post-translocation (POST) complex to a pre-translocation (PRE) complex, thus giving elongation factor G a second chance to translocate the tRNAs correctly. Binds to ribosomes in a GTP-dependent manner. This is Elongation factor 4 from Campylobacter fetus subsp. fetus (strain 82-40).